The following is a 1513-amino-acid chain: Exo-beta-1,6-galactobiohydrolase (1513 aa).

A signal peptide spans M1 to A31. The Ricin B-type lectin domain occupies V666–R801. F5/8 type C domains are found at residues A965–T1112 and G1116–Q1273. The interval V1456 to N1480 is disordered. Positions P1465 to N1480 are enriched in polar residues. The helical transmembrane segment at V1489–L1509 threads the bilayer.

Belongs to the glycosyl hydrolase 30 family.

It is found in the cell membrane. It catalyses the reaction Hydrolysis of (1-&gt;6)-beta-D-galactosidic linkages in arabinogalactan proteins and (1-&gt;3):(1-&gt;6)-beta-galactans to yield (1-&gt;6)-beta-galactobiose as the final product.. In terms of biological role, involved in the type II arabinogalactan (AG) side chains degradation. Specifically releases the non-reducing terminal beta-1,6-galactobiose (beta-1,6-Gal2) from both dearabinosylated larch AG and polymeric beta-1,6-galactan chains by an exo-mode of action. Shows lower activity with larch AG, and very weak activity with dearabinosylated gum arabic, gum arabic and potato galactan. Can probably release beta-1,6-Gal2 from the internal side chains of type II AG. This Bifidobacterium longum subsp. longum (strain ATCC 15707 / DSM 20219 / JCM 1217 / NCTC 11818 / E194b) protein is Exo-beta-1,6-galactobiohydrolase.